Here is an 888-residue protein sequence, read N- to C-terminus: Endochitinase A1 (888 aa).

The signal sequence occupies residues 1 to 22; sequence MVSSKLSFVATAVAALAPLASA. Residues 29–338 form the GH18 domain; the sequence is SNLAIYWGQG…DHMKDILLHC (310 aa). The active-site Proton donor is E174. 3 disordered regions span residues 338–631, 743–799, and 813–855; these read CDPS…TTTA, PVTE…VSTS, and PLIL…YTQE. Positions 344–617 are enriched in low complexity; the sequence is VTSSSAIPSS…STDESSTTVG (274 aa). N622 carries N-linked (GlcNAc...) asparagine glycosylation. A compositionally biased stretch (polar residues) spans 764-775; that stretch reads EGSNPTQPSGAS. N-linked (GlcNAc...) asparagine glycosylation is present at N780. Residues 835–855 show a composition bias toward polar residues; the sequence is PSGQNSGSSSHVPIPPSYTQE. A lipid anchor (GPI-anchor amidated glycine) is attached at G863. The propeptide at 864–888 is removed in mature form; that stretch reads AASRVTGLGHGLVLTVLTLSAFFVL.

It belongs to the glycosyl hydrolase 18 family. Chitinase class III subfamily.

It is found in the cell membrane. Its subcellular location is the secreted. The protein resides in the cell wall. The enzyme catalyses Random endo-hydrolysis of N-acetyl-beta-D-glucosaminide (1-&gt;4)-beta-linkages in chitin and chitodextrins.. With respect to regulation, the cyclic peptide natural product argifin acts as a specific inhibitor. GPI-anchored chitinase involved in the degradation of chitin, a component of the cell walls of fungi and exoskeletal elements of some animals (including worms and arthropods). Required to reshape the cell wall at the sites where cell wall remodeling and/or cell wall maturation actively take place such as sites of conidia formation. This Aspergillus fumigatus (strain ATCC MYA-4609 / CBS 101355 / FGSC A1100 / Af293) (Neosartorya fumigata) protein is Endochitinase A1 (chiA1).